The following is a 529-amino-acid chain: MTLSPYLQEVAKRRTFAIISHPDAGKTTITEKVLLFGQAIQTAGTVKGRGSNQHAKSDWMEMEKQRGISITTSVMQFPYHDCLVNLLDTPGHEDFSEDTYRTLTAVDCCLMVIDAAKGVEDRTRKLMEVTRLRDTPILTFMNKLDRDIRDPMELLDEVENELKIGCAPITWPIGCGKLFKGVYHLYKDETYLYQSGKGHTIQEVRIVKGLNNPDLDAAVGEDLAQQLRDELELVKGASNEFDKELFLAGEITPVFFGTALGNFGVDHMLDGLVEWAPAPMPRQTDTRTVEASEDKFTGFVFKIQANMDPKHRDRVAFMRVVSGKYEKGMKLRQVRTAKDVVISDALTFMAGDRSHVEEAYPGDILGLHNHGTIQIGDTFTQGEMMKFTGIPNFAPELFRRIRLKDPLKQKQLLKGLVQLSEEGAVQVFRPISNNDLIVGAVGVLQFDVVVSRLKSEYNVEAVYESVNVATARWVECADAKKFEEFKRKNESQLALDGGDNLAYIATSMVNLRLAQERYPDVQFHQTREH.

In terms of domain architecture, tr-type G spans 11–280 (AKRRTFAIIS…GLVEWAPAPM (270 aa)). GTP contacts are provided by residues 20–27 (SHPDAGKT), 88–92 (DTPGH), and 142–145 (NKLD).

Belongs to the TRAFAC class translation factor GTPase superfamily. Classic translation factor GTPase family. PrfC subfamily.

Its subcellular location is the cytoplasm. Increases the formation of ribosomal termination complexes and stimulates activities of RF-1 and RF-2. It binds guanine nucleotides and has strong preference for UGA stop codons. It may interact directly with the ribosome. The stimulation of RF-1 and RF-2 is significantly reduced by GTP and GDP, but not by GMP. The polypeptide is Peptide chain release factor 3 (Shigella boydii serotype 18 (strain CDC 3083-94 / BS512)).